Reading from the N-terminus, the 792-residue chain is MPNQGEDCYFYFYSTCAKGDSCPFRHCEAALGNETVCTLWQEGRCFRQVCRFRHMEIDKKRSEIPCYWENQPVGCQKLNCAFHHTRSRYVDGLFLPPSKTVLPTVPESQEEEVKTSQLTVQQSKLSVQSNPSPQLRSVMKVESSENVPSPTHPPVVINAADDDEDDDDQFSEEGDESKTPALQPSPDVHNGLRVASARKPGVSLKQGECLNFGIKTLEEIKSKKMKEKSKKQGEGSSGVSSVLQQPQPNPGPEKENVRTVVRMVTLSSKPEEPLVRLSLSERLGKRKLSVGGDSDPPLKRSLAQRLGKKVESPETNIDKAPKKERGHKAGEIHVKTLEEILLERASQKRGELQTKLKAEEPSGADDSPSGTKSSSSVRIKTFSEVLAEKKHRQQEMERQKSKKDTSCLTLTDDTEMKKTVSLPTVAVSKGQPEEPAGRARSMQEVHIKTLEEIKLEKALRVQQSSESSGNSRPQAEAAPGTKRLLRITKRAGVKEEKKCGLEDSGDPPQSSVTKMEANETSDETISDPTKLAVNRCDTVKEKHTQRLQERGASQKEKAALSSVRGDEASSYTRVAGKPVLTAVSGVTRHLAKRLPVESSQKGEVETSGIGDSILNVKCAAQTLEKRSKVKPKVNVKPSVVKVVSAPKLAPKRKAVEMHSAVIAAVKPLSSSSVLQESPTKKAAVAVVPLLSEDKPVTMSETENPKDSSVLSSAQAASEPLLPEGSGPSSSQTATKPRRLSSASTGKPPLSVEDDFEKLIWEISGGKLEAEIDLDPGKDEDDLLLELSEMIDS.

3 C3H1-type zinc fingers span residues 2-29, 31-57, and 60-87; these read PNQG…HCEA, LGNE…HMEI, and KRSE…HTRS. Disordered stretches follow at residues 103 to 191, 223 to 331, and 345 to 443; these read PTVP…VHNG, KKMK…KAGE, and ASQK…RSMQ. Position 108 is a phosphoserine (S108). Glycyl lysine isopeptide (Lys-Gly) (interchain with G-Cter in SUMO2) cross-links involve residues K114 and K124. A compositionally biased stretch (polar residues) spans 115 to 135; it reads TSQLTVQQSKLSVQSNPSPQL. S132 is subject to Phosphoserine. A Glycyl lysine isopeptide (Lys-Gly) (interchain with G-Cter in SUMO2) cross-link involves residue K140. S149, S171, and S289 each carry phosphoserine. Positions 160 to 175 are enriched in acidic residues; sequence ADDDEDDDDQFSEEGD. Basic and acidic residues-rich tracts occupy residues 308-331 and 345-360; these read KKVE…KAGE and ASQK…KAEE. Residues 338-360 are a coiled coil; sequence EEILLERASQKRGELQTKLKAEE. S346 carries the post-translational modification Phosphoserine. Positions 367–376 are enriched in low complexity; that stretch reads SPSGTKSSSS. Composition is skewed to basic and acidic residues over residues 393–405 and 431–443; these read QQEM…KKDT and QPEE…RSMQ. K454 participates in a covalent cross-link: Glycyl lysine isopeptide (Lys-Gly) (interchain with G-Cter in SUMO2). Disordered stretches follow at residues 458–531 and 545–571; these read ALRV…PTKL and QRLQ…ASSY. Polar residues predominate over residues 461-473; it reads VQQSSESSGNSRP. Composition is skewed to basic and acidic residues over residues 492–501 and 545–558; these read GVKEEKKCGL and QRLQ…KEKA. K601 is covalently cross-linked (Glycyl lysine isopeptide (Lys-Gly) (interchain with G-Cter in SUMO2)). Residues 690 to 750 form a disordered region; it reads LSEDKPVTMS…SASTGKPPLS (61 aa). Residues 698 to 715 show a composition bias toward polar residues; sequence MSETENPKDSSVLSSAQA. The span at 717 to 730 shows a compositional bias: low complexity; sequence SEPLLPEGSGPSSS.

In terms of assembly, interacts with TREX complex components THOC2, DDX39 and POLDIP3; the interactions are ATP-dependent. Interacts with PABPN1; this interaction retains ZC3H11A in nuclear speckles. Interacts with KPNA3.

It is found in the nucleus speckle. Through its association with TREX complex components, may participate in the export and post-transcriptional coordination of selected mRNA transcripts, including those required to maintain the metabolic processes in embryonic cells. Binds RNA. The polypeptide is Zinc finger CCCH domain-containing protein 11A (Zc3h11a) (Mus musculus (Mouse)).